The sequence spans 433 residues: Trigger factor (433 aa).

Positions 163–248 (GDTVNIDFSG…VNEIKFKDVP (86 aa)) constitute a PPIase FKBP-type domain.

It belongs to the FKBP-type PPIase family. Tig subfamily.

It localises to the cytoplasm. The enzyme catalyses [protein]-peptidylproline (omega=180) = [protein]-peptidylproline (omega=0). Functionally, involved in protein export. Acts as a chaperone by maintaining the newly synthesized protein in an open conformation. Functions as a peptidyl-prolyl cis-trans isomerase. This chain is Trigger factor, found in Staphylococcus epidermidis (strain ATCC 35984 / DSM 28319 / BCRC 17069 / CCUG 31568 / BM 3577 / RP62A).